Reading from the N-terminus, the 282-residue chain is Elongation factor Ts (282 aa).

The segment at T79–V82 is involved in Mg(2+) ion dislocation from EF-Tu.

This sequence belongs to the EF-Ts family.

The protein resides in the cytoplasm. In terms of biological role, associates with the EF-Tu.GDP complex and induces the exchange of GDP to GTP. It remains bound to the aminoacyl-tRNA.EF-Tu.GTP complex up to the GTP hydrolysis stage on the ribosome. The sequence is that of Elongation factor Ts from Shewanella loihica (strain ATCC BAA-1088 / PV-4).